Here is a 396-residue protein sequence, read N- to C-terminus: THAP domain-containing protein 5 (396 aa).

Residues 2-85 form a THAP-type zinc finger; the sequence is MPRYCAAICC…LKQTAVPTIF (84 aa). The interval 86–113 is disordered; it reads SLPEDNQGKDPSKKKSQKKNLEDEKEVC. Positions 91–113 are enriched in basic and acidic residues; it reads NQGKDPSKKKSQKKNLEDEKEVC. Residues 322–325 carry the HCFC1-binding motif (HBM) motif; it reads EHSY. Residues 349–382 are a coiled coil; that stretch reads LELKEQQTLGRLKSLEALVRQLKQENWLSEENVK.

Interacts with HTRA2; under apoptotic conditions. Interacts with ABRAXAS2. In terms of processing, cleaved by HTRA2 during apoptosis.

It localises to the nucleus. In terms of biological role, has sequence-specific DNA-binding activity and can function as transcriptional repressor (in vitro). May be a regulator of cell cycle: THAP5 overexpression in human cell lines causes cell cycle arrest at G2/M phase. The chain is THAP domain-containing protein 5 (THAP5) from Macaca fascicularis (Crab-eating macaque).